A 238-amino-acid polypeptide reads, in one-letter code: RNA-free ribonuclease P (238 aa).

Belongs to the HARP family.

It carries out the reaction Endonucleolytic cleavage of RNA, removing 5'-extranucleotides from tRNA precursor.. RNA-free RNase P that catalyzes the removal of the 5'-leader sequence from pre-tRNA to produce the mature 5'-terminus. This Hyperthermus butylicus (strain DSM 5456 / JCM 9403 / PLM1-5) protein is RNA-free ribonuclease P.